The sequence spans 243 residues: MSGHSKWHNIQGRKNAQDAKRGKIFQKLSRELFMAARSGGPDPSSNAALRLIMDKARSANMPKDNIKRAIDKADGSDGANYDEITYEGYAPGGVAVLVHALTDNKNRTSSDVRVAFTRNGGTMGAAGSVAYMFDRRGYIAIAREGLDVDEDQMFEDILEAGADDLQTEEDVFEIYTDPKELANVRDILEKKYTLANAELTMIPQNTTPVDPEKVEQFQRLVDALEDNDDVQDVYTAGELPEEE.

Residues 1 to 21 (MSGHSKWHNIQGRKNAQDAKR) are disordered.

This sequence belongs to the TACO1 family.

The protein localises to the cytoplasm. The protein is Probable transcriptional regulatory protein LCA_1307 of Latilactobacillus sakei subsp. sakei (strain 23K) (Lactobacillus sakei subsp. sakei).